A 168-amino-acid polypeptide reads, in one-letter code: Small ribosomal subunit protein bS6 (168 aa).

A disordered region spans residues 103-168; that stretch reads RQAIAEEKEK…AAADKSDDNA (66 aa). Residues 106–115 show a composition bias toward basic and acidic residues; sequence IAEEKEKKAE. Over residues 116-125 the composition is skewed to low complexity; that stretch reads GQAAADAAPA.

The protein belongs to the bacterial ribosomal protein bS6 family.

In terms of biological role, binds together with bS18 to 16S ribosomal RNA. The chain is Small ribosomal subunit protein bS6 from Desulfosudis oleivorans (strain DSM 6200 / JCM 39069 / Hxd3) (Desulfococcus oleovorans).